The chain runs to 595 residues: Tyrosine-protein phosphatase cdcA (595 aa).

The disordered stretch occupies residues 32–57 (TPFPYPAEQPKSPSKRRAQASPSKKR). A compositionally biased stretch (basic residues) spans 44–57 (PSKRRAQASPSKKR). In terms of domain architecture, Tyrosine-protein phosphatase spans 233 to 381 (LPSTVSEVRS…QGSFREWWFE (149 aa)). Catalysis depends on C322, which acts as the Phosphocysteine intermediate. Residues 392-595 (QPNPVTPGRS…GSPVRVKAQA (204 aa)) form a disordered region. Residues 449–461 (RKSHRKDSRHHPY) are compositionally biased toward basic residues. Over residues 471-483 (VDKDTRKTRRSTD) the composition is skewed to basic and acidic residues. The span at 502–526 (SKSPAASPGQRSISYSATVTASYTL) shows a compositional bias: polar residues.

Belongs to the protein-tyrosine phosphatase family. Non-receptor class CDC14 subfamily.

It is found in the nucleus. Its subcellular location is the cytoplasm. The protein resides in the cell septum. The enzyme catalyses O-phospho-L-tyrosyl-[protein] + H2O = L-tyrosyl-[protein] + phosphate. Functionally, protein phosphatase which antagonizes mitotic cyclin-dependent kinase nimX, the inactivation of which is essential for exit from mitosis. To access its substrates, is released from nucleolar sequestration during mitosis. Plays an essential in coordinating the nuclear division cycle with cytokinesis through the cytokinesis checkpoint. Involved in chromosome segregation, where it is required for meiosis I spindle dissambly as well as for establishing two consecutive chromosome segregation phases. Required for the transcription of the two major endoglucanase genes eglA and eglB and growth on synthetic cellulose as the sole carbon source. The protein is Tyrosine-protein phosphatase cdcA (cdcA) of Emericella nidulans (strain FGSC A4 / ATCC 38163 / CBS 112.46 / NRRL 194 / M139) (Aspergillus nidulans).